The chain runs to 218 residues: Protein-methionine-sulfoxide reductase heme-binding subunit MsrQ (218 aa).

Transmembrane regions (helical) follow at residues 14–34 (LVHA…WQVW), 60–80 (LLLI…AVVI), 86–106 (LGLY…TLDL), 121–141 (PYIT…ITST), and 155–175 (LHML…WLVK).

This sequence belongs to the MsrQ family. Heterodimer of a catalytic subunit (MsrP) and a heme-binding subunit (MsrQ). Requires FMN as cofactor. Heme b serves as cofactor.

Its subcellular location is the cell inner membrane. Functionally, part of the MsrPQ system that repairs oxidized periplasmic proteins containing methionine sulfoxide residues (Met-O), using respiratory chain electrons. Thus protects these proteins from oxidative-stress damage caused by reactive species of oxygen and chlorine generated by the host defense mechanisms. MsrPQ is essential for the maintenance of envelope integrity under bleach stress, rescuing a wide series of structurally unrelated periplasmic proteins from methionine oxidation. MsrQ provides electrons for reduction to the reductase catalytic subunit MsrP, using the quinone pool of the respiratory chain. The protein is Protein-methionine-sulfoxide reductase heme-binding subunit MsrQ of Xanthomonas axonopodis pv. citri (strain 306).